We begin with the raw amino-acid sequence, 172 residues long: uncharacterized protein (172 aa).

A compositionally biased stretch (gly residues) spans alanine 147 to serine 159. The tract at residues alanine 147–leucine 172 is disordered.

This is an uncharacterized protein from Homo sapiens (Human).